Here is a 306-residue protein sequence, read N- to C-terminus: Phosphatidylserine decarboxylase proenzyme (306 aa).

Residues D98, H155, and S259 each act as charge relay system; for autoendoproteolytic cleavage activity in the active site. The Schiff-base intermediate with substrate; via pyruvic acid; for decarboxylase activity role is filled by S259. S259 carries the pyruvic acid (Ser); by autocatalysis modification.

Belongs to the phosphatidylserine decarboxylase family. PSD-B subfamily. Prokaryotic type I sub-subfamily. In terms of assembly, heterodimer of a large membrane-associated beta subunit and a small pyruvoyl-containing alpha subunit. Pyruvate serves as cofactor. In terms of processing, is synthesized initially as an inactive proenzyme. Formation of the active enzyme involves a self-maturation process in which the active site pyruvoyl group is generated from an internal serine residue via an autocatalytic post-translational modification. Two non-identical subunits are generated from the proenzyme in this reaction, and the pyruvate is formed at the N-terminus of the alpha chain, which is derived from the carboxyl end of the proenzyme. The autoendoproteolytic cleavage occurs by a canonical serine protease mechanism, in which the side chain hydroxyl group of the serine supplies its oxygen atom to form the C-terminus of the beta chain, while the remainder of the serine residue undergoes an oxidative deamination to produce ammonia and the pyruvoyl prosthetic group on the alpha chain. During this reaction, the Ser that is part of the protease active site of the proenzyme becomes the pyruvoyl prosthetic group, which constitutes an essential element of the active site of the mature decarboxylase.

It localises to the cell membrane. The enzyme catalyses a 1,2-diacyl-sn-glycero-3-phospho-L-serine + H(+) = a 1,2-diacyl-sn-glycero-3-phosphoethanolamine + CO2. It functions in the pathway phospholipid metabolism; phosphatidylethanolamine biosynthesis; phosphatidylethanolamine from CDP-diacylglycerol: step 2/2. Its function is as follows. Catalyzes the formation of phosphatidylethanolamine (PtdEtn) from phosphatidylserine (PtdSer). This chain is Phosphatidylserine decarboxylase proenzyme, found in Nitrosococcus oceani (strain ATCC 19707 / BCRC 17464 / JCM 30415 / NCIMB 11848 / C-107).